We begin with the raw amino-acid sequence, 232 residues long: Enolase-phosphatase E1 (232 aa).

This sequence belongs to the HAD-like hydrolase superfamily. MasA/MtnC family. Monomer. The cofactor is Mg(2+).

The enzyme catalyses 5-methylsulfanyl-2,3-dioxopentyl phosphate + H2O = 1,2-dihydroxy-5-(methylsulfanyl)pent-1-en-3-one + phosphate. Its pathway is amino-acid biosynthesis; L-methionine biosynthesis via salvage pathway; L-methionine from S-methyl-5-thio-alpha-D-ribose 1-phosphate: step 3/6. It participates in amino-acid biosynthesis; L-methionine biosynthesis via salvage pathway; L-methionine from S-methyl-5-thio-alpha-D-ribose 1-phosphate: step 4/6. Bifunctional enzyme that catalyzes the enolization of 2,3-diketo-5-methylthiopentyl-1-phosphate (DK-MTP-1-P) into the intermediate 2-hydroxy-3-keto-5-methylthiopentenyl-1-phosphate (HK-MTPenyl-1-P), which is then dephosphorylated to form the acireductone 1,2-dihydroxy-3-keto-5-methylthiopentene (DHK-MTPene). The sequence is that of Enolase-phosphatase E1 from Xanthomonas campestris pv. campestris (strain B100).